The following is a 213-amino-acid chain: Orotate phosphoribosyltransferase (213 aa).

Lys-26 contacts 5-phospho-alpha-D-ribose 1-diphosphate. 34-35 (FF) is a binding site for orotate. 5-phospho-alpha-D-ribose 1-diphosphate-binding positions include 72–73 (YK), Arg-99, Lys-100, Lys-103, His-105, and 124–132 (DDVITAGTA). Positions 128 and 156 each coordinate orotate.

Belongs to the purine/pyrimidine phosphoribosyltransferase family. PyrE subfamily. In terms of assembly, homodimer. Requires Mg(2+) as cofactor.

It catalyses the reaction orotidine 5'-phosphate + diphosphate = orotate + 5-phospho-alpha-D-ribose 1-diphosphate. The protein operates within pyrimidine metabolism; UMP biosynthesis via de novo pathway; UMP from orotate: step 1/2. In terms of biological role, catalyzes the transfer of a ribosyl phosphate group from 5-phosphoribose 1-diphosphate to orotate, leading to the formation of orotidine monophosphate (OMP). The polypeptide is Orotate phosphoribosyltransferase (Klebsiella pneumoniae subsp. pneumoniae (strain ATCC 700721 / MGH 78578)).